The following is a 273-amino-acid chain: Putative pyruvate, phosphate dikinase regulatory protein (273 aa).

149–156 (GPSRTSKT) contacts ADP.

It belongs to the pyruvate, phosphate/water dikinase regulatory protein family. PDRP subfamily.

The catalysed reaction is N(tele)-phospho-L-histidyl/L-threonyl-[pyruvate, phosphate dikinase] + ADP = N(tele)-phospho-L-histidyl/O-phospho-L-threonyl-[pyruvate, phosphate dikinase] + AMP + H(+). It carries out the reaction N(tele)-phospho-L-histidyl/O-phospho-L-threonyl-[pyruvate, phosphate dikinase] + phosphate + H(+) = N(tele)-phospho-L-histidyl/L-threonyl-[pyruvate, phosphate dikinase] + diphosphate. Functionally, bifunctional serine/threonine kinase and phosphorylase involved in the regulation of the pyruvate, phosphate dikinase (PPDK) by catalyzing its phosphorylation/dephosphorylation. The protein is Putative pyruvate, phosphate dikinase regulatory protein of Rickettsia bellii (strain OSU 85-389).